Reading from the N-terminus, the 395-residue chain is Acid ceramidase (395 aa).

A signal peptide spans 1-21; sequence MLGRSRLTFVLLSVTVTCSVA. C31 and C340 are disulfide-bonded. C143 acts as the Nucleophile in catalysis. N-linked (GlcNAc...) asparagine glycosylation is found at N173, N259, N342, and N348. C388 and C392 are disulfide-bonded.

Belongs to the acid ceramidase family. As to quaternary structure, heterodimer; disulfide-linked. The heterodimer is composed of the disulfide-linked alpha and beta chains produced by autocatalytic cleavage of the precursor. In terms of processing, N-glycosylated. Proteolytically cleaved into two chains alpha and beta that remain associated via a disulfide bond. Cleavage gives rise to a conformation change that activates the enzyme. The same catalytic Cys residue mediates the autoproteolytic cleavage and subsequent hydrolysis of lipid substrates. The beta chain may undergo an additional C-terminal processing.

The protein localises to the lysosome. It localises to the secreted. The enzyme catalyses an N-acylsphing-4-enine + H2O = sphing-4-enine + a fatty acid. It catalyses the reaction N-dodecanoylsphing-4-enine + H2O = dodecanoate + sphing-4-enine. The catalysed reaction is N-tetradecanoylsphing-4-enine + H2O = tetradecanoate + sphing-4-enine. It carries out the reaction N-hexadecanoylsphing-4-enine + H2O = sphing-4-enine + hexadecanoate. The enzyme catalyses N-octadecanoylsphing-4-enine + H2O = sphing-4-enine + octadecanoate. It catalyses the reaction N-dodecanoyl-(4R)-hydroxysphinganine + H2O = (4R)-hydroxysphinganine + dodecanoate. The catalysed reaction is N-(dodecanoyl)-sphinganine + H2O = dodecanoate + sphinganine. It carries out the reaction N-(acetyl)-sphing-4-enine + H2O = sphing-4-enine + acetate. The enzyme catalyses N-(hexanoyl)sphing-4-enine + H2O = hexanoate + sphing-4-enine. It catalyses the reaction N-octanoylsphing-4-enine + H2O = octanoate + sphing-4-enine. The catalysed reaction is N-(9Z-octadecenoyl)-sphing-4-enine + H2O = sphing-4-enine + (9Z)-octadecenoate. It carries out the reaction N-dodecanoylethanolamine + H2O = dodecanoate + ethanolamine. It participates in lipid metabolism; sphingolipid metabolism. Its function is as follows. Lysosomal ceramidase that hydrolyzes sphingolipid ceramides into sphingosine and free fatty acids at acidic pH. Ceramides, sphingosine, and its phosphorylated form sphingosine-1-phosphate are bioactive lipids that mediate cellular signaling pathways regulating several biological processes including cell proliferation, apoptosis and differentiation. Has a higher catalytic efficiency towards C12-ceramides versus other ceramides. Also catalyzes the reverse reaction allowing the synthesis of ceramides from fatty acids and sphingosine. For the reverse synthetic reaction, the natural sphingosine D-erythro isomer is more efficiently utilized as a substrate compared to D-erythro-dihydrosphingosine and D-erythro-phytosphingosine, while the fatty acids with chain lengths of 12 or 14 carbons are the most efficiently used. Also has an N-acylethanolamine hydrolase activity. By regulating the levels of ceramides, sphingosine and sphingosine-1-phosphate in the epidermis, mediates the calcium-induced differentiation of epidermal keratinocytes. Also indirectly regulates tumor necrosis factor/TNF-induced apoptosis. By regulating the intracellular balance between ceramides and sphingosine, in adrenocortical cells, probably also acts as a regulator of steroidogenesis. The protein is Acid ceramidase of Balaenoptera acutorostrata scammoni (North Pacific minke whale).